The primary structure comprises 372 residues: Queuine tRNA-ribosyltransferase (372 aa).

The Proton acceptor role is filled by aspartate 92. Residues 92–96 (DSGGF), aspartate 146, glutamine 188, and glycine 215 contribute to the substrate site. The segment at 246-252 (GIGTLRE) is RNA binding. The active-site Nucleophile is aspartate 265. The interval 270 to 274 (TRLGR) is RNA binding; important for wobble base 34 recognition. Cysteine 303, cysteine 305, cysteine 308, and histidine 334 together coordinate Zn(2+).

It belongs to the queuine tRNA-ribosyltransferase family. As to quaternary structure, homodimer. Within each dimer, one monomer is responsible for RNA recognition and catalysis, while the other monomer binds to the replacement base PreQ1. It depends on Zn(2+) as a cofactor.

It catalyses the reaction 7-aminomethyl-7-carbaguanine + guanosine(34) in tRNA = 7-aminomethyl-7-carbaguanosine(34) in tRNA + guanine. It participates in tRNA modification; tRNA-queuosine biosynthesis. Its function is as follows. Catalyzes the base-exchange of a guanine (G) residue with the queuine precursor 7-aminomethyl-7-deazaguanine (PreQ1) at position 34 (anticodon wobble position) in tRNAs with GU(N) anticodons (tRNA-Asp, -Asn, -His and -Tyr). Catalysis occurs through a double-displacement mechanism. The nucleophile active site attacks the C1' of nucleotide 34 to detach the guanine base from the RNA, forming a covalent enzyme-RNA intermediate. The proton acceptor active site deprotonates the incoming PreQ1, allowing a nucleophilic attack on the C1' of the ribose to form the product. After dissociation, two additional enzymatic reactions on the tRNA convert PreQ1 to queuine (Q), resulting in the hypermodified nucleoside queuosine (7-(((4,5-cis-dihydroxy-2-cyclopenten-1-yl)amino)methyl)-7-deazaguanosine). The polypeptide is Queuine tRNA-ribosyltransferase (Synechococcus sp. (strain CC9311)).